The following is a 150-amino-acid chain: Peptide deformylase 1 (150 aa).

The Fe cation site is built by C88 and H130. The active site involves E131. H134 contributes to the Fe cation binding site.

This sequence belongs to the polypeptide deformylase family. The cofactor is Fe(2+).

The catalysed reaction is N-terminal N-formyl-L-methionyl-[peptide] + H2O = N-terminal L-methionyl-[peptide] + formate. Functionally, removes the formyl group from the N-terminal Met of newly synthesized proteins. Requires at least a dipeptide for an efficient rate of reaction. N-terminal L-methionine is a prerequisite for activity but the enzyme has broad specificity at other positions. This chain is Peptide deformylase 1, found in Clostridium acetobutylicum (strain ATCC 824 / DSM 792 / JCM 1419 / IAM 19013 / LMG 5710 / NBRC 13948 / NRRL B-527 / VKM B-1787 / 2291 / W).